A 236-amino-acid chain; its full sequence is Diaminopimelate epimerase (236 aa).

2 residues coordinate substrate: Asn-8 and Asn-55. Residue Cys-64 is the Proton donor of the active site. Residues 65–66 (GN), Asn-159, and 176–177 (ER) each bind substrate. Catalysis depends on Cys-186, which acts as the Proton acceptor. Substrate is bound at residue 187–188 (GT).

It belongs to the diaminopimelate epimerase family. In terms of assembly, probably forms homotrimers.

It is found in the cytoplasm. It catalyses the reaction (2S,6S)-2,6-diaminopimelate = meso-2,6-diaminopimelate. It participates in amino-acid biosynthesis; L-lysine biosynthesis via DAP pathway; DL-2,6-diaminopimelate from LL-2,6-diaminopimelate: step 1/1. Its function is as follows. Catalyzes the stereoinversion of LL-2,6-diaminopimelate (L,L-DAP) to meso-diaminopimelate (meso-DAP), a precursor of L-lysine and an essential component of the bacterial peptidoglycan. Also catalyzes the racemization of certain amino acids, including Lys, with low efficiency. The protein is Diaminopimelate epimerase of Thermotoga maritima (strain ATCC 43589 / DSM 3109 / JCM 10099 / NBRC 100826 / MSB8).